The chain runs to 197 residues: Phospholipid hydroperoxide glutathione peroxidase (197 aa).

Ser-40 is modified (phosphoserine). Sec-73 is a catalytic residue. Sec-73 is a non-standard amino acid (selenocysteine). Residue Val-78 is modified to Phosphoserine.

This sequence belongs to the glutathione peroxidase family. As to quaternary structure, monomer. Has a tendency to form higher mass oligomers. Interacts with FUNDC1; this interaction promotes GPX4 recruitment into mitochondria through TOM/TIM complex where it is degraded by mitophagy. As to expression, present primarily in testis. Expressed in flagella of epididymal sperm. Isoform Cytoplasmic: Highly expressed in testis. Present in spermatogonia, spermatocyte and spermatid (at protein level).

The protein resides in the nucleus. Its subcellular location is the nucleolus. It is found in the mitochondrion. It localises to the cytoplasm. The enzyme catalyses a hydroperoxy polyunsaturated fatty acid + 2 glutathione = a hydroxy polyunsaturated fatty acid + glutathione disulfide + H2O. It carries out the reaction 2 glutathione + H2O2 = glutathione disulfide + 2 H2O. It catalyses the reaction tert-butyl hydroperoxide + 2 glutathione = tert-butanol + glutathione disulfide + H2O. The catalysed reaction is cumene hydroperoxide + 2 glutathione = 2-phenylpropan-2-ol + glutathione disulfide + H2O. The enzyme catalyses (9S)-hydroperoxy-(10E,12Z)-octadecadienoate + 2 glutathione = (9S)-hydroxy-(10E,12Z)-octadecadienoate + glutathione disulfide + H2O. It carries out the reaction (13S)-hydroperoxy-(9Z,11E)-octadecadienoate + 2 glutathione = (13S)-hydroxy-(9Z,11E)-octadecadienoate + glutathione disulfide + H2O. It catalyses the reaction (5S)-hydroperoxy-(6E,8Z,11Z,14Z)-eicosatetraenoate + 2 glutathione = (5S)-hydroxy-(6E,8Z,11Z,14Z)-eicosatetraenoate + glutathione disulfide + H2O. The catalysed reaction is (12R)-hydroperoxy-(5Z,8Z,10E,14Z)-eicosatetraenoate + 2 glutathione = (12R)-hydroxy-(5Z,8Z,10E,14Z)-eicosatetraenoate + glutathione disulfide + H2O. The enzyme catalyses (12S)-hydroperoxy-(5Z,8Z,10E,14Z)-eicosatetraenoate + 2 glutathione = (12S)-hydroxy-(5Z,8Z,10E,14Z)-eicosatetraenoate + glutathione disulfide + H2O. It carries out the reaction (15S)-hydroperoxy-(5Z,8Z,11Z,13E)-eicosatetraenoate + 2 glutathione = (15S)-hydroxy-(5Z,8Z,11Z,13E)-eicosatetraenoate + glutathione disulfide + H2O. It catalyses the reaction (5S)-hydroperoxy-(6E,8Z,11Z,14Z,17Z)-eicosapentaenoate + 2 glutathione = (5S)-hydroxy-(6E,8Z,11Z,14Z,17Z)-eicosapentaenoate + glutathione disulfide + H2O. The catalysed reaction is (12S)-hydroperoxy-(5Z,8Z,10E,14Z,17Z)-eicosapentaenoate + 2 glutathione = (12S)-hydroxy-(5Z,8Z,10E,14Z,17Z)-eicosapentaenoate + glutathione disulfide + H2O. The enzyme catalyses (15S)-hydroperoxy-(5Z,8Z,11Z,13E,17Z)-eicosapentaenoate + 2 glutathione = (15S)-hydroxy-(5Z,8Z,11Z,13E,17Z)-eicosapentaenoate + glutathione disulfide + H2O. It carries out the reaction (15S)-hydroperoxy-(11Z,13E)-eicosadienoate + 2 glutathione = (15S)-hydroxy-(11Z,13E)-eicosadienoate + glutathione disulfide + H2O. It catalyses the reaction (17S)-hydroperoxy-(4Z,7Z,10Z,13Z,15E,19Z)-docosahexaenoate + 2 glutathione = (17S)-hydroxy-(4Z,7Z,10Z,13Z,15E,19Z)-docosahexaenoate + glutathione disulfide + H2O. The catalysed reaction is a hydroperoxy-1,2-diacyl-glycero-3-phosphocholine + 2 glutathione = a hydroxy-1,2-diacyl-glycero-3-phosphocholine + glutathione disulfide + H2O. Functionally, essential antioxidant peroxidase that directly reduces phospholipid hydroperoxide even if they are incorporated in membranes and lipoproteins. Can also reduce fatty acid hydroperoxide, cholesterol hydroperoxide and thymine hydroperoxide. Plays a key role in protecting cells from oxidative damage by preventing membrane lipid peroxidation. Required to prevent cells from ferroptosis, a non-apoptotic cell death resulting from an iron-dependent accumulation of lipid reactive oxygen species. The presence of selenocysteine (Sec) versus Cys at the active site is essential for life: it provides resistance to overoxidation and prevents cells against ferroptosis. The presence of Sec at the active site is also essential for the survival of a specific type of parvalbumin-positive interneurons, thereby preventing against fatal epileptic seizures. May be required to protect cells from the toxicity of ingested lipid hydroperoxides. Required for normal sperm development and male fertility. Essential for maturation and survival of photoreceptor cells. Plays a role in a primary T-cell response to viral and parasitic infection by protecting T-cells from ferroptosis and by supporting T-cell expansion. Plays a role of glutathione peroxidase in platelets in the arachidonic acid metabolism. Reduces hydroperoxy ester lipids formed by a 15-lipoxygenase that may play a role as down-regulator of the cellular 15-lipoxygenase pathway. Can also reduce small soluble hydroperoxides such as H2O2, cumene hydroperoxide and tert-butyl hydroperoxide. In terms of biological role, specifically able to suppress the production of leukotriene and prostaglandin in response to several stimuli by reducing fatty acid hydroperoxide. Specifically required to prevent mitochondrial cell death by mediating reduction of cardiolipin hydroperoxide. Also required for normal sperm development and male fertility. Its function is as follows. Required for male fertility by stabilizing the condensed chromatin in sperm nuclei. The polypeptide is Phospholipid hydroperoxide glutathione peroxidase (Rattus norvegicus (Rat)).